The sequence spans 248 residues: 1-(5-phosphoribosyl)-5-[(5-phosphoribosylamino)methylideneamino] imidazole-4-carboxamide isomerase (248 aa).

Aspartate 11 serves as the catalytic Proton acceptor. The active-site Proton donor is aspartate 132.

This sequence belongs to the HisA/HisF family.

Its subcellular location is the cytoplasm. It carries out the reaction 1-(5-phospho-beta-D-ribosyl)-5-[(5-phospho-beta-D-ribosylamino)methylideneamino]imidazole-4-carboxamide = 5-[(5-phospho-1-deoxy-D-ribulos-1-ylimino)methylamino]-1-(5-phospho-beta-D-ribosyl)imidazole-4-carboxamide. Its pathway is amino-acid biosynthesis; L-histidine biosynthesis; L-histidine from 5-phospho-alpha-D-ribose 1-diphosphate: step 4/9. This is 1-(5-phosphoribosyl)-5-[(5-phosphoribosylamino)methylideneamino] imidazole-4-carboxamide isomerase from Afipia carboxidovorans (strain ATCC 49405 / DSM 1227 / KCTC 32145 / OM5) (Oligotropha carboxidovorans).